Here is a 142-residue protein sequence, read N- to C-terminus: Glia maturation factor gamma (142 aa).

Ser-2 bears the N-acetylserine mark. An ADF-H domain is found at 4-139 (SLVVCDVDPE…NETWLKEKLA (136 aa)).

Belongs to the actin-binding proteins ADF family. GMF subfamily. As to expression, expressed in rat thymus, testis, and spleen. Is present predominantly in proliferative and differentiative organs.

In Rattus norvegicus (Rat), this protein is Glia maturation factor gamma (Gmfg).